A 114-amino-acid polypeptide reads, in one-letter code: Photosystem II reaction center Psb28 protein (114 aa).

The protein belongs to the Psb28 family. As to quaternary structure, part of the photosystem II complex.

The protein localises to the plastid. It is found in the chloroplast thylakoid membrane. The sequence is that of Photosystem II reaction center Psb28 protein from Thalassiosira pseudonana (Marine diatom).